We begin with the raw amino-acid sequence, 276 residues long: Undecaprenyl-diphosphatase 1 (276 aa).

7 helical membrane passes run 4-24, 45-62, 83-103, 108-128, 187-207, 217-237, and 252-272; these read ILIC…FLPV, KTFD…VCWE, FTLN…LFEK, VLFS…IILW, VATE…TLYE, VDSL…AFVC, and VFAW…YSGW.

Belongs to the UppP family.

Its subcellular location is the cell inner membrane. It carries out the reaction di-trans,octa-cis-undecaprenyl diphosphate + H2O = di-trans,octa-cis-undecaprenyl phosphate + phosphate + H(+). Its function is as follows. Catalyzes the dephosphorylation of undecaprenyl diphosphate (UPP). Confers resistance to bacitracin. The sequence is that of Undecaprenyl-diphosphatase 1 from Burkholderia ambifaria (strain ATCC BAA-244 / DSM 16087 / CCUG 44356 / LMG 19182 / AMMD) (Burkholderia cepacia (strain AMMD)).